The primary structure comprises 859 residues: Leucine--tRNA ligase (859 aa).

Positions 42–52 (PYPSGRLHMGH) match the 'HIGH' region motif. Residues 618–622 (KMSKS) carry the 'KMSKS' region motif. K621 is a binding site for ATP.

This sequence belongs to the class-I aminoacyl-tRNA synthetase family.

The protein resides in the cytoplasm. The catalysed reaction is tRNA(Leu) + L-leucine + ATP = L-leucyl-tRNA(Leu) + AMP + diphosphate. The sequence is that of Leucine--tRNA ligase from Shewanella baltica (strain OS223).